Consider the following 286-residue polypeptide: Deaminated glutathione amidase (286 aa).

Residues 4 to 252 enclose the CN hydrolase domain; the sequence is ANVALLQLCS…VSALKVKIET (249 aa). Glu-42 functions as the Proton acceptor in the catalytic mechanism. The active site involves Lys-115. Cys-157 functions as the Nucleophile in the catalytic mechanism.

It belongs to the carbon-nitrogen hydrolase superfamily. NIT1/NIT2 family.

It carries out the reaction N-(4-oxoglutaryl)-L-cysteinylglycine + H2O = L-cysteinylglycine + 2-oxoglutarate. In terms of biological role, hydrolyzes deaminated glutathione (dGSH, 2-oxoglutaramate) to alpha-ketoglutarate (alpha-KG) and cysteinylglycine (specific activity 6.50 umol/min/mg), has less activity against alpha-ketoglutaramate (a-KGM, specific activity 0.20 umol/min/mg), very little activity on glutathione and none on L-glutamine. May function as a metabolite repair enzyme. This is Deaminated glutathione amidase from Yersinia enterocolitica.